Consider the following 493-residue polypeptide: Glycerol kinase (493 aa).

Thr11 provides a ligand contact to ADP. ATP-binding residues include Thr11, Thr12, and Ser13. Thr11 provides a ligand contact to sn-glycerol 3-phosphate. An ADP-binding site is contributed by Arg15. Residues Arg80, Glu81, Tyr132, and Asp241 each coordinate sn-glycerol 3-phosphate. Positions 80, 81, 132, 241, and 242 each coordinate glycerol. Thr263 and Gly306 together coordinate ADP. Thr263, Gly306, Gln310, and Gly408 together coordinate ATP. Residue Gly408 participates in ADP binding.

It belongs to the FGGY kinase family.

It catalyses the reaction glycerol + ATP = sn-glycerol 3-phosphate + ADP + H(+). It participates in polyol metabolism; glycerol degradation via glycerol kinase pathway; sn-glycerol 3-phosphate from glycerol: step 1/1. With respect to regulation, inhibited by fructose 1,6-bisphosphate (FBP). Functionally, key enzyme in the regulation of glycerol uptake and metabolism. Catalyzes the phosphorylation of glycerol to yield sn-glycerol 3-phosphate. In Cereibacter sphaeroides (strain ATCC 17023 / DSM 158 / JCM 6121 / CCUG 31486 / LMG 2827 / NBRC 12203 / NCIMB 8253 / ATH 2.4.1.) (Rhodobacter sphaeroides), this protein is Glycerol kinase.